Consider the following 333-residue polypeptide: Transcription factor HHO6 (333 aa).

Residues 189 to 249 (ALRKQRRCWN…HLQKYRLHIR (61 aa)) form the HTH myb-type domain. The segment at residues 220-245 (PKQIREHMQEEGLTNDEVKSHLQKYR) is a DNA-binding region (H-T-H motif). Positions 274–333 (DEEETCEGGESLKRSNAQSDSPQGPLQLPSTTTTTGGDSSMEDVEDAKSESFQLERLRSP) are disordered. Residues 287–303 (RSNAQSDSPQGPLQLPS) show a composition bias toward polar residues. The span at 319 to 333 (DAKSESFQLERLRSP) shows a compositional bias: basic and acidic residues.

It localises to the nucleus. Its function is as follows. Probable transcription factor involved in phosphate signaling in roots. This chain is Transcription factor HHO6, found in Arabidopsis thaliana (Mouse-ear cress).